Here is a 388-residue protein sequence, read N- to C-terminus: Mannitol-1-phosphate 5-dehydrogenase (388 aa).

5-16 (AIQFGGGNIGRG) is an NAD(+) binding site. Lysine 213 is a catalytic residue.

This sequence belongs to the mannitol dehydrogenase family. In terms of assembly, monomer.

It catalyses the reaction D-mannitol 1-phosphate + NAD(+) = beta-D-fructose 6-phosphate + NADH + H(+). Catalyzes the NAD(H)-dependent interconversion of D-fructose 6-phosphate and D-mannitol 1-phosphate in the mannitol metabolic pathway. The polypeptide is Mannitol-1-phosphate 5-dehydrogenase (mpdA) (Aspergillus terreus (strain NIH 2624 / FGSC A1156)).